A 181-amino-acid chain; its full sequence is Sodium/potassium-transporting ATPase subunit beta-1-interacting protein 3 (181 aa).

A run of 4 helical transmembrane segments spans residues 2–22, 35–55, 62–82, and 152–172; these read GCCTGRCSLVCLCALQLLSAL, APILGNFLHIIVVILGLFGTI, IMVYTVWTALWVTWNVFIICF, and VQILLSLVGFVYACYVISISM.

The protein belongs to the NKAIN family. Interacts with ATP1B1. In terms of tissue distribution, detected in the brain only and specifically in neurons. Expressed in multiple regions such as cerebral cortex, thalamus, hippocampus, olfactory bulb and brainstem as well as in cerebellum with low expression in granular cell layer.

The protein resides in the cell membrane. In Mus musculus (Mouse), this protein is Sodium/potassium-transporting ATPase subunit beta-1-interacting protein 3 (Nkain3).